The chain runs to 456 residues: Ribulose bisphosphate carboxylase large chain (456 aa).

An N6,N6,N6-trimethyllysine modification is found at K7. 2 residues coordinate substrate: N116 and T166. K168 functions as the Proton acceptor in the catalytic mechanism. Residue K170 participates in substrate binding. Positions 194, 196, and 197 each coordinate Mg(2+). Residue K194 is modified to N6-carboxylysine. H287 acts as the Proton acceptor in catalysis. Residues R288, H320, and S372 each coordinate substrate.

It belongs to the RuBisCO large chain family. Type I subfamily. As to quaternary structure, heterohexadecamer of 8 large chains and 8 small chains; disulfide-linked. The disulfide link is formed within the large subunit homodimers. Mg(2+) serves as cofactor. In terms of processing, the disulfide bond which can form in the large chain dimeric partners within the hexadecamer appears to be associated with oxidative stress and protein turnover.

The protein localises to the plastid. The protein resides in the chloroplast. The enzyme catalyses 2 (2R)-3-phosphoglycerate + 2 H(+) = D-ribulose 1,5-bisphosphate + CO2 + H2O. The catalysed reaction is D-ribulose 1,5-bisphosphate + O2 = 2-phosphoglycolate + (2R)-3-phosphoglycerate + 2 H(+). Functionally, ruBisCO catalyzes two reactions: the carboxylation of D-ribulose 1,5-bisphosphate, the primary event in carbon dioxide fixation, as well as the oxidative fragmentation of the pentose substrate in the photorespiration process. Both reactions occur simultaneously and in competition at the same active site. This chain is Ribulose bisphosphate carboxylase large chain, found in Barnardia japonica (Chinese squill).